Reading from the N-terminus, the 291-residue chain is Formamidopyrimidine-DNA glycosylase (291 aa).

Pro2 functions as the Schiff-base intermediate with DNA in the catalytic mechanism. Glu3 serves as the catalytic Proton donor. Lys58 acts as the Proton donor; for beta-elimination activity in catalysis. DNA contacts are provided by His100, Arg123, and Lys166. Residues 257–291 (SVYGREGKECLHCGIPIVRILQSGRSSFYCSQCQK) form an FPG-type zinc finger. Arg281 (proton donor; for delta-elimination activity) is an active-site residue.

The protein belongs to the FPG family. In terms of assembly, monomer. It depends on Zn(2+) as a cofactor.

It carries out the reaction Hydrolysis of DNA containing ring-opened 7-methylguanine residues, releasing 2,6-diamino-4-hydroxy-5-(N-methyl)formamidopyrimidine.. The catalysed reaction is 2'-deoxyribonucleotide-(2'-deoxyribose 5'-phosphate)-2'-deoxyribonucleotide-DNA = a 3'-end 2'-deoxyribonucleotide-(2,3-dehydro-2,3-deoxyribose 5'-phosphate)-DNA + a 5'-end 5'-phospho-2'-deoxyribonucleoside-DNA + H(+). Its function is as follows. Involved in base excision repair of DNA damaged by oxidation or by mutagenic agents. Acts as a DNA glycosylase that recognizes and removes damaged bases. Has a preference for oxidized purines, such as 7,8-dihydro-8-oxoguanine (8-oxoG). Has AP (apurinic/apyrimidinic) lyase activity and introduces nicks in the DNA strand. Cleaves the DNA backbone by beta-delta elimination to generate a single-strand break at the site of the removed base with both 3'- and 5'-phosphates. The protein is Formamidopyrimidine-DNA glycosylase of Bartonella henselae (strain ATCC 49882 / DSM 28221 / CCUG 30454 / Houston 1) (Rochalimaea henselae).